A 689-amino-acid chain; its full sequence is Glycine--tRNA ligase beta subunit (689 aa).

The protein belongs to the class-II aminoacyl-tRNA synthetase family. As to quaternary structure, tetramer of two alpha and two beta subunits.

Its subcellular location is the cytoplasm. The catalysed reaction is tRNA(Gly) + glycine + ATP = glycyl-tRNA(Gly) + AMP + diphosphate. The polypeptide is Glycine--tRNA ligase beta subunit (Acinetobacter baumannii (strain AB307-0294)).